The chain runs to 192 residues: Fe/S biogenesis protein NfuA (192 aa).

Positions 149 and 152 each coordinate [4Fe-4S] cluster.

It belongs to the NfuA family. As to quaternary structure, homodimer. The cofactor is [4Fe-4S] cluster.

Its function is as follows. Involved in iron-sulfur cluster biogenesis. Binds a 4Fe-4S cluster, can transfer this cluster to apoproteins, and thereby intervenes in the maturation of Fe/S proteins. Could also act as a scaffold/chaperone for damaged Fe/S proteins. This is Fe/S biogenesis protein NfuA from Shewanella sp. (strain ANA-3).